The primary structure comprises 113 residues: Urease subunit beta (113 aa).

Belongs to the urease beta subunit family. Heterotrimer of UreA (gamma), UreB (beta) and UreC (alpha) subunits. Three heterotrimers associate to form the active enzyme.

The protein resides in the cytoplasm. The catalysed reaction is urea + 2 H2O + H(+) = hydrogencarbonate + 2 NH4(+). It participates in nitrogen metabolism; urea degradation; CO(2) and NH(3) from urea (urease route): step 1/1. The sequence is that of Urease subunit beta from Cyanothece sp. (strain PCC 7425 / ATCC 29141).